Here is a 150-residue protein sequence, read N- to C-terminus: Transcriptional repressor NrdR (150 aa).

Residues 1–26 (MKCPFCGNSDSKVVDSRPDKGGSGIR) form a disordered region. A zinc finger lies at 3–34 (CPFCGNSDSKVVDSRPDKGGSGIRRRRECEQC). The 91-residue stretch at 49–139 (PLVLKKDGRR…VYRSFRDINE (91 aa)) folds into the ATP-cone domain.

Belongs to the NrdR family. Requires Zn(2+) as cofactor.

Negatively regulates transcription of bacterial ribonucleotide reductase nrd genes and operons by binding to NrdR-boxes. This is Transcriptional repressor NrdR from Pelobacter propionicus (strain DSM 2379 / NBRC 103807 / OttBd1).